The following is a 206-amino-acid chain: Ribosomal RNA large subunit methyltransferase E (206 aa).

S-adenosyl-L-methionine-binding residues include glycine 60, tryptophan 62, aspartate 80, aspartate 96, and aspartate 121. The active-site Proton acceptor is the lysine 161.

Belongs to the class I-like SAM-binding methyltransferase superfamily. RNA methyltransferase RlmE family.

Its subcellular location is the cytoplasm. The enzyme catalyses uridine(2552) in 23S rRNA + S-adenosyl-L-methionine = 2'-O-methyluridine(2552) in 23S rRNA + S-adenosyl-L-homocysteine + H(+). Its function is as follows. Specifically methylates the uridine in position 2552 of 23S rRNA at the 2'-O position of the ribose in the fully assembled 50S ribosomal subunit. This is Ribosomal RNA large subunit methyltransferase E from Legionella pneumophila (strain Lens).